A 286-amino-acid chain; its full sequence is MQNKIDHKNIKTIGLVTRPNVSLDKEILKLQSILSIYKVELVLFKESSEILDLPKYGLDDLFKISDFVISLGGDGTLISLCRKACEYDKAVLGIHAGHLGFLTDFKVDEAENFFQAFFQGEFRIEKPYLLSVFLEDKQGKILEKLAFNDVVISKNNQASMAHIEVFRKEKKFNEYFGDGLIVATPAGSTAYNLSANGPIVYTLAQAFILTPVCSHSLTQRPIVLPKGFEIEIMAKDCILCIDGQENYKMNDFKSIKVGLSDKNVALIHPKNRDYFQILKEKLHWGN.

The active-site Proton acceptor is the Asp74. Residues 74–75, 148–149, Asp178, Ala186, 189–194, and Gln244 each bind NAD(+); these read DG, ND, and TAYNLS.

The protein belongs to the NAD kinase family. It depends on a divalent metal cation as a cofactor.

The protein localises to the cytoplasm. The catalysed reaction is NAD(+) + ATP = ADP + NADP(+) + H(+). Functionally, involved in the regulation of the intracellular balance of NAD and NADP, and is a key enzyme in the biosynthesis of NADP. Catalyzes specifically the phosphorylation on 2'-hydroxyl of the adenosine moiety of NAD to yield NADP. In Campylobacter jejuni subsp. jejuni serotype O:23/36 (strain 81-176), this protein is NAD kinase.